Here is a 209-residue protein sequence, read N- to C-terminus: LexA repressor (209 aa).

The H-T-H motif DNA-binding region spans 29 to 49 (VREIGSAIGLSSTSTVHGHID). Residues Ser130 and Lys168 each act as for autocatalytic cleavage activity in the active site.

This sequence belongs to the peptidase S24 family. As to quaternary structure, homodimer.

It catalyses the reaction Hydrolysis of Ala-|-Gly bond in repressor LexA.. Functionally, represses a number of genes involved in the response to DNA damage (SOS response), including recA and lexA. In the presence of single-stranded DNA, RecA interacts with LexA causing an autocatalytic cleavage which disrupts the DNA-binding part of LexA, leading to derepression of the SOS regulon and eventually DNA repair. The sequence is that of LexA repressor from Pediococcus pentosaceus (strain ATCC 25745 / CCUG 21536 / LMG 10740 / 183-1w).